A 149-amino-acid polypeptide reads, in one-letter code: 16.9 kDa class I heat shock protein 3 (149 aa).

Residues 35–149 enclose the sHSP domain; sequence DTAAFANARV…PEVKAIEISG (115 aa).

It belongs to the small heat shock protein (HSP20) family. As to quaternary structure, may form oligomeric structures.

The protein localises to the cytoplasm. The polypeptide is 16.9 kDa class I heat shock protein 3 (HSP16.9C) (Oryza sativa subsp. japonica (Rice)).